A 326-amino-acid polypeptide reads, in one-letter code: Putative ankyrin repeat protein L25 (326 aa).

10 ANK repeats span residues R11–V40, K42–V65, D66–V95, N96–A125, N127–A154, E155–A184, E185–A214, D216–A244, N246–A274, and K275–A304.

In Acanthamoeba polyphaga mimivirus (APMV), this protein is Putative ankyrin repeat protein L25.